Consider the following 247-residue polypeptide: 2,3-bisphosphoglycerate-dependent phosphoglycerate mutase (247 aa).

Substrate is bound by residues 8 to 15 (RHGESTWN), 21 to 22 (TG), arginine 60, 87 to 90 (ERHY), lysine 98, 114 to 115 (RR), and 183 to 184 (GN). The active-site Tele-phosphohistidine intermediate is histidine 9. Catalysis depends on glutamate 87, which acts as the Proton donor/acceptor.

It belongs to the phosphoglycerate mutase family. BPG-dependent PGAM subfamily. Homodimer.

It catalyses the reaction (2R)-2-phosphoglycerate = (2R)-3-phosphoglycerate. Its pathway is carbohydrate degradation; glycolysis; pyruvate from D-glyceraldehyde 3-phosphate: step 3/5. Functionally, catalyzes the interconversion of 2-phosphoglycerate and 3-phosphoglycerate. This chain is 2,3-bisphosphoglycerate-dependent phosphoglycerate mutase, found in Paracidovorax citrulli (strain AAC00-1) (Acidovorax citrulli).